The chain runs to 1231 residues: STE20-like serine/threonine-protein kinase (1231 aa).

The residue at position 14 (Ser14) is a Phosphoserine. A Protein kinase domain is found at 34–292; that stretch reads WETIGELGDG…TSQLLQHPFV (259 aa). Residues 40–48 and Lys63 contribute to the ATP site; that span reads LGDGAFGKV. Asp155 (proton acceptor) is an active-site residue. Thr183 is subject to Phosphothreonine. A Phosphoserine modification is found at Ser189. Residues 309-351 form a disordered region; it reads AEVTEEVEDGKEEDDDEEIENSLPIPTNKRASSDLSIASSEED. Over residues 312–328 the composition is skewed to acidic residues; it reads TEEVEDGKEEDDDEEIE. A phosphoserine mark is found at Ser330, Ser340, Ser341, Ser344, Ser347, Ser348, Ser354, and Ser372. Over residues 337-347 the composition is skewed to polar residues; sequence KRASSDLSIAS. The interval 405-478 is disordered; sequence PDRATELPES…KQPVLENKLV (74 aa). 2 stretches are compositionally biased toward basic and acidic residues: residues 407-428 and 446-478; these read RATE…RLPD and DHAV…NKLV. Residue Ser507 is modified to Phosphoserine. The span at 516-531 shows a compositional bias: basic and acidic residues; the sequence is THEKLRKDDTTQKDVI. The segment at 516 to 757 is disordered; the sequence is THEKLRKDDT…TGSTADNSSI (242 aa). A phosphoserine mark is found at Ser536 and Ser554. A compositionally biased stretch (basic and acidic residues) spans 601–613; the sequence is TDQKLVENTHEKQ. Over residues 615 to 624 the composition is skewed to polar residues; that stretch reads PISSETTLDT. Phosphoserine is present on residues Ser641 and Ser661. Acidic residues predominate over residues 641–660; that stretch reads STEEVEVEGAVSETDEEDVQ. Over residues 683-692 the composition is skewed to low complexity; the sequence is EAPAQVEVQV. Residues 693 to 706 show a composition bias toward pro residues; that stretch reads PVPPQPSEPPPAPI. Ser775 carries the post-translational modification Phosphoserine. Thr810 bears the Phosphothreonine mark. Phosphoserine is present on Ser814. The stretch at 822-1065 forms a coiled coil; the sequence is LRRQELRELR…LKNRQTQERA (244 aa). A UVR domain is found at 871–906; the sequence is DQEIENLEKQQKQTIERLEQEHTNRLRDEAKRIKGE. A Phosphothreonine modification is found at Thr1093. The stretch at 1105-1179 forms a coiled coil; it reads SAQEEKRQKN…ELKEWREKLR (75 aa).

The protein belongs to the protein kinase superfamily. STE Ser/Thr protein kinase family. STE20 subfamily. In terms of processing, proteolytically cleaved by caspase-3. Autophosphorylated. In terms of tissue distribution, ubiquitously expressed.

It localises to the cytoplasm. It catalyses the reaction L-seryl-[protein] + ATP = O-phospho-L-seryl-[protein] + ADP + H(+). The catalysed reaction is L-threonyl-[protein] + ATP = O-phospho-L-threonyl-[protein] + ADP + H(+). Its function is as follows. Mediates apoptosis and actin stress fiber dissolution. The protein is STE20-like serine/threonine-protein kinase (SLK) of Cavia porcellus (Guinea pig).